The chain runs to 1013 residues: AP-2 complex subunit alpha-2 (1013 aa).

4 HEAT repeats span residues 254–289, 354–391, 393–430, and 521–565; these read AMRA…VVKN, DIIK…VSNA, DIVE…DLSW, and TVST…CIDV. A disordered region spans residues 652–676; the sequence is STDPESVARSLSHPNGTLSNIDPQT. Over residues 663 to 675 the composition is skewed to polar residues; it reads SHPNGTLSNIDPQ. In terms of domain architecture, GAE spans 742–841; that stretch reads ALCLKDSGVL…LDFSYKFGTN (100 aa). The tract at residues 760–1013 is required for AP180 binding; the sequence is GIKAEWRGHH…DPGAMLAGLL (254 aa).

Belongs to the adaptor complexes large subunit family. As to quaternary structure, adaptor protein complex 2 (AP-2) is a heterotetramer composed of two large adaptins (alpha-type and beta-type subunits), a medium adaptin (mu-type subunit) and a small adaptin (sigma-type subunit). Interacts with AP180.

The protein localises to the membrane. The protein resides in the coated pit. In terms of biological role, subunit of the adaptor protein complex 2 (AP-2). Adaptor protein complexes function in protein transport via transport vesicles in different membrane traffic pathways. Adaptor protein complexes are vesicle coat components and appear to be involved in cargo selection and vesicle formation. AP-2 is involved in clathrin-dependent endocytosis in which cargo proteins are incorporated into vesicles surrounded by clathrin (clathrin-coated vesicles, CCVs) which are destined for fusion with the early endosome. The complex binds polyphosphoinositides. This is AP-2 complex subunit alpha-2 (ALPHAC-AD) from Arabidopsis thaliana (Mouse-ear cress).